A 729-amino-acid polypeptide reads, in one-letter code: Alpha-galactosidase AgaA (729 aa).

Substrate is bound by residues Asp53, Trp199, 366–367 (DD), Arg443, 476–480 (KWDMN), Cys526, and Asp548. Asp478 serves as the catalytic Nucleophile. The active-site Proton donor is Asp548.

Belongs to the glycosyl hydrolase 36 family. Homotetramer.

It catalyses the reaction Hydrolysis of terminal, non-reducing alpha-D-galactose residues in alpha-D-galactosides, including galactose oligosaccharides, galactomannans and galactolipids.. Its activity is regulated as follows. Not inhibited by D-galactose or sucrose. Inhibited by pharmaceutical drug 1-deoxygalactonojirimycin. Its function is as follows. Hydrolyzes the short-chain alpha-galactosaccharides raffinose and stachyose. The protein is Alpha-galactosidase AgaA of Geobacillus stearothermophilus (Bacillus stearothermophilus).